Reading from the N-terminus, the 2454-residue chain is MERSRKHRALSITPHKQKQYMLDIEDNNVSTSSLTTTTTTTTTTTTTTSTTHNHESNERSNQLLESLIVLKEKIKLLDSTEKNHCITQGGITILIQCLCYCGKNSIKNDVIIEICQQLIDNSHDASRLFCKQIISHLYNDIECIGISDVLTKIISFYPLRSIFIEDLCIPKLLEIYYKCSLALSNIKFKVDPSIHINSTPVVQQSQQQLSNSSSSIPTSTSSPLQSSSSSSSSSATTASTASTTSSTTSNSSPTKTLGKQQQKQNSQQQQQQQQQQQQQQQQQQQQQQQQQQQQQQQQQQQKLNIHEFQSIQIPCWDDGVPPPPPQGFTFENLLTSVPIPRPPLFQQHQQSTTSNNNNNTIIQQSNTKSGDVTTPTSILSPISTITNNNNNVNSTNITPAPTPNLPSSVTSPISTSTNPPSNNPKPTSIGQIQSLHYHNPSLYQTPPLFNRNRGNNNNNNNDSNTSSPMDSPLISSTVASLNSNNSTAAATTTTTTTISTPTISTPSITSRVPPLPLSNSINNNNVNQIHPNNTPNSATSGGSISKVPMLSMGGIGGGGGGGSGGGGISKSIVPRLNLPVRVENSTRNTRSSRRRDDASNSTRSHQGELKIETSASKELSDLAIKLGETYMTADLTALISYKQAIESHKQSKRSIPSRRYDIPPISSKNTAALSMVNQQQSSFSELNLYKVRCNILKTLISSTSNNLMLLQYGNNPINILYSESILLHKGIIPSDKDHLTLFYKLASHWSDYVEYIHRNRWRDVTKGMGLERKASFRKKLDLLLWRINSSISNMLETFTFDDMEYQLCILSEYMENCPSRILSSQVVDVCIESLLKVKHSIFRGPITSDRVKDIHIIHYLLTVFDEIIKQNKSSPINDLFISIFLERDETFQFIKQYTIQILTNESIEREFSKCYPNDQNKIRLTEFRCRSIKHFSICVKMLKFKFKKQQENKLYNQHNCNNNNINNINNNNNNNNNNNNNNNNNNNNNNNNNNSNNSGSSGNLANNLNTPTSSQTNSSSTTTAGTNPTSTSTSSTTTGTNSTTTTTNENEIPDLLKKMEFLLLPQGNGVILPFLQSNNFFTHFNVKKQMLKFLNHVFLFKKNPFTKKKLYIDSYISYIYISFIKLYNNYIFDQATLTLCRLFLNILISFSVNKNDKISMKFYQLRTMDFLVREVNLEYEIKQNKDQFLKPLSSIPFFANSSDDTSSSSSTSSSLSLSTTTTTTTTTTTKTTTTTNTNSTTPIKTGGPPTIPKLATPGTKLNLGLNLSGITKTDNSSNNNNTSSPPVIPKLSLQPKIDSGSSTSSPSTLISTPSTLASTPPTTGVSSNPLIKPKFSLNLSSISKGSPASTSSSNLTTTTISSSSSSSNSTTTSLTTVPASTIIDSTSSTSTSTTTTTIGSVSTEPPLPAPPKPKFSLNLSSVSKTGQASTSTPNLLNLKNIPTTTNNSNSTTTTTTTTPTGKPQFSLNLSSLSKSSSSTETVPPSQPNQPISKPIIKSLNLGSISKGGSTTTTTTTTTPPPINNSNNTIASNNNEINLPKLSNSPINISSSKPPILIPKLVLPAIKIRSEEDTKQAGTGVLSSIEQKIDPQDPKFQLVLDNPSQSLTPSDRDSEQMIEPTENEIFNENQRYQLERNNRKLYHDRDLHISLLQLIFSLLLNSNQTLEHLYSDQFPIVAKKLNVPFILHLHINHQDNEKIIPELTKRTHEMGPNHFRILKLLFSRLYHSNLFKDLKRVAKGAYGTVYKGTLGNDEGLEIAVKLMPVPKTIHDRCVLYDIFTEILIMDTFRSDSRGCHMFDYGVDGENYWIVMKSYKCSLKEWRLKQTLPFLELLPLLLNIFTNVLQSVQFLGDHKINHFDIKCDNFLVHPLKKGTIEEDFWNQPTNDPNFAVCLADWGEAKVYTQDVEGYTTRNRGTEFIKSPEMLTIAYASQKTRENFDRRKKVGSNTASDVWSLGCLFYELLTGDFLFYDDDWVKFFIRVTQPGQELITPERKSKVANIPAILDYLDYVFIRDPFYRPTLRDLLTKFIAIKPTILSQWEQLKKKLDGHMSNQMNTVEKPKQYYNGGDGTSYKAKSIKFTGHYTPGRFLPHSYNANNPIKVGSLMVDGDKSTLEMPYEAAEFPEHRFYMDRPSKVASFMYISSFNPSMNKNMLINEYQITHIINCTGSPNAFPDHFEYLHLQLHDQPHQDITQSLSLAFDFIRDAIVHHGKVLICSDKGVSRSSALAIGYFMDSRSISYFEAFILVRDCRYIISPNTGFVEQLCRWGKQRRNFKGLSEWGGGETNSTLFQCLCGACSFTLLTPFDNRKYSNPKKCCCTPGSDLDCPNHIIGCSNFLGDMKKLHGYNNLNYLAWGYTNIINVVGDYERSSIEIVYNNNSNNINNNNNNNSNNSKSKQQQQQQQNQNIQQNNDWNLFKCKFCHFLTCAISKSTSGVNENLIAVVTNQRTNYFPSTLK.

The segment covering 31-51 (TSSLTTTTTTTTTTTTTTSTT) has biased composition (low complexity). Disordered stretches follow at residues 31–57 (TSSL…HESN), 206–265 (QQQL…QKQN), 340–612 (PRPP…LKIE), 963–1051 (NNIN…NENE), 1201–1330 (SSDD…SNPL), and 1342–1528 (ISKG…SNNT). Residues 259 to 307 (KQQQKQNSQQQQQQQQQQQQQQQQQQQQQQQQQQQQQQQQQQQKLNIHE) adopt a coiled-coil conformation. Low complexity-rich tracts occupy residues 346 to 399 (QQHQ…NITP) and 406 to 428 (PSSV…KPTS). Polar residues predominate over residues 429 to 444 (IGQIQSLHYHNPSLYQ). 2 stretches are compositionally biased toward low complexity: residues 450–461 (NRNRGNNNNNNN) and 475–536 (SSTV…NTPN). A compositionally biased stretch (gly residues) spans 553-568 (GGIGGGGGGGSGGGGI). 5 stretches are compositionally biased toward low complexity: residues 963-1048 (NNIN…TTTN), 1201-1248 (SSDD…TGGP), 1275-1284 (NSSNNNNTSS), 1299-1324 (SGSS…PTTG), and 1346-1403 (SPAS…SVST). A compositionally biased stretch (polar residues) spans 1417 to 1441 (LNLSSVSKTGQASTSTPNLLNLKNI). Over residues 1442-1478 (PTTTNNSNSTTTTTTTTPTGKPQFSLNLSSLSKSSSS) the composition is skewed to low complexity. The segment covering 1479-1491 (TETVPPSQPNQPI) has biased composition (polar residues). Low complexity predominate over residues 1509–1528 (STTTTTTTTTPPPINNSNNT). Residues 1730-2034 (FKDLKRVAKG…TKFIAIKPTI (305 aa)) form the Protein kinase domain. ATP-binding positions include 1736–1744 (VAKGAYGTV) and K1760. The active-site Proton acceptor is the D1858. Residues 2130 to 2271 (RPSKVASFMY…LCRWGKQRRN (142 aa)) form the Tyrosine-protein phosphatase domain. A disordered region spans residues 2379-2404 (NINNNNNNNSNNSKSKQQQQQQQNQN).

Belongs to the protein kinase superfamily. Ser/Thr protein kinase family.

The enzyme catalyses L-seryl-[protein] + ATP = O-phospho-L-seryl-[protein] + ADP + H(+). It carries out the reaction L-threonyl-[protein] + ATP = O-phospho-L-threonyl-[protein] + ADP + H(+). This Dictyostelium discoideum (Social amoeba) protein is Probable serine/threonine-protein kinase DDB_G0277071.